The following is a 253-amino-acid chain: Triosephosphate isomerase (253 aa).

Residue Asn-8–Lys-10 coordinates substrate. Residue His-93 is the Electrophile of the active site. Glu-165 functions as the Proton acceptor in the catalytic mechanism. Substrate contacts are provided by residues Gly-171, Ser-210, and Gly-231–Gly-232.

It belongs to the triosephosphate isomerase family. In terms of assembly, homodimer.

It is found in the cytoplasm. The enzyme catalyses D-glyceraldehyde 3-phosphate = dihydroxyacetone phosphate. Its pathway is carbohydrate biosynthesis; gluconeogenesis. It functions in the pathway carbohydrate degradation; glycolysis; D-glyceraldehyde 3-phosphate from glycerone phosphate: step 1/1. Its function is as follows. Involved in the gluconeogenesis. Catalyzes stereospecifically the conversion of dihydroxyacetone phosphate (DHAP) to D-glyceraldehyde-3-phosphate (G3P). The sequence is that of Triosephosphate isomerase from Francisella philomiragia subsp. philomiragia (strain ATCC 25017 / CCUG 19701 / FSC 153 / O#319-036).